Reading from the N-terminus, the 468-residue chain is Elongation factor 1-alpha (468 aa).

The region spanning 6-244 (KPHINIVVIG…DNIPLPARPS (239 aa)) is the tr-type G domain. Residues 15–22 (GHVDSGKS) form a G1 region. 15–22 (GHVDSGKS) contacts GTP. Positions 71–75 (GITID) are G2. The tract at residues 92–95 (DAPG) is G3. Residues 92-96 (DAPGH) and 154-157 (NKID) each bind GTP. The segment at 154–157 (NKID) is G4. Residues 195 to 197 (SGW) form a G5 region. 5-glutamyl glycerylphosphorylethanolamine occurs at positions 303 and 376.

This sequence belongs to the TRAFAC class translation factor GTPase superfamily. Classic translation factor GTPase family. EF-Tu/EF-1A subfamily.

The protein localises to the cytoplasm. In terms of biological role, this protein promotes the GTP-dependent binding of aminoacyl-tRNA to the A-site of ribosomes during protein biosynthesis. The protein is Elongation factor 1-alpha of Hydra vulgaris (Hydra).